A 259-amino-acid chain; its full sequence is UPF0246 protein NGK_0633 (259 aa).

Belongs to the UPF0246 family.

The protein is UPF0246 protein NGK_0633 of Neisseria gonorrhoeae (strain NCCP11945).